We begin with the raw amino-acid sequence, 112 residues long: MKKRFISVCAIAIALFVSLTPAALAADLANGAKVFSGNCAACHMGGGNVVMANKTLKKEALEQFGMYSEDAIIYQVQHGKNAMPAFAGRLTDEQIQDVAAYVLDQAAKGWAG.

The N-terminal stretch at 1–25 (MKKRFISVCAIAIALFVSLTPAALA) is a signal peptide. Residues Cys-39, Cys-42, His-43, and Met-83 each contribute to the heme c site.

It belongs to the cytochrome c family. PetJ subfamily. In terms of assembly, monomer. In terms of processing, binds 1 heme c group covalently per subunit.

Its subcellular location is the cellular thylakoid lumen. Its function is as follows. Functions as an electron carrier between membrane-bound cytochrome b6-f and photosystem I in oxygenic photosynthesis. The polypeptide is Cytochrome c6 (petJ) (Thermostichus vulcanus (Synechococcus vulcanus)).